The following is a 355-amino-acid chain: NAD-dependent protein deacylase sirtuin-6 (355 aa).

Position 2 is an N-acetylserine (Ser-2). Ser-10 is subject to Phosphoserine. Residues 27–272 (PEELERKVWE…TRLMKHLGLE (246 aa)) form the Deacetylase sirtuin-type domain. Lys-33 carries the N6-acetyllysine modification. Positions 53, 57, 64, 65, 71, 113, and 133 each coordinate NAD(+). His-133 acts as the Proton acceptor in catalysis. 3 residues coordinate Zn(2+): Cys-141, Cys-144, and Cys-166. Residue Lys-170 forms a Glycyl lysine isopeptide (Lys-Gly) (interchain with G-Cter in ubiquitin) linkage. Cys-177 is a Zn(2+) binding site. NAD(+)-binding residues include Gly-214, Ser-216, Asn-240, Gln-242, and Val-258. Residues 284–355 (RALPPLPRPP…KRVKAEAVPS (72 aa)) are disordered. Over residues 287 to 296 (PPLPRPPTPK) the composition is skewed to pro residues. Thr-294 is subject to Phosphothreonine. A phosphoserine mark is found at Ser-303 and Ser-330.

The protein belongs to the sirtuin family. Class IV subfamily. In terms of assembly, homodimer; binds to nucleosomes and DNA ends as a homodimer. Interacts with RELA; interferes with RELA binding to target DNA. Interacts with SMARCA5; promoting recruitment of SMARCA5/SNF2H to double-strand breaks (DSBs) sites. Interacts with the mTORC2 complex; preventing the ability of SIRT6 to deacetylate FOXO1. Interacts with the CLOCK-BMAL1 complex; recruited by the CLOCK-BMAL1 complex to regulate expression of clock-controlled genes. Interacts with CSNK2A2; preventing CSNK2A2 localization to the nucleus. In terms of processing, acetylated at Lys-33. Deacetylation at Lys-33 by SIRT1 promotes homomultimerization and binding to double-strand breaks (DSBs) sites. Post-translationally, phosphorylation at Ser-10 by MAPK8/JNK1 in response to oxidative stress stimulates the mono-ADP-ribosyltransferase activity on PARP1, leading to PARP1 recruitment to double-strand breaks (DSBs). Monoubiquitinated at Lys-170 by STUB1/CHIP, preventing its degradation by the proteasome. In terms of processing, sumoylated, leading to specifically decrease ability to deacetylate histone H3 at 'Lys-56' (H3K56ac).

It localises to the nucleus. Its subcellular location is the chromosome. The protein resides in the telomere. It is found in the endoplasmic reticulum. The catalysed reaction is N(6)-acetyl-L-lysyl-[protein] + NAD(+) + H2O = 2''-O-acetyl-ADP-D-ribose + nicotinamide + L-lysyl-[protein]. It carries out the reaction N(6)-tetradecanoyl-L-lysyl-[protein] + NAD(+) + H2O = 2''-O-tetradecanoyl-ADP-D-ribose + nicotinamide + L-lysyl-[protein]. It catalyses the reaction N(6)-hexadecanoyl-L-lysyl-[protein] + NAD(+) + H2O = 2''-O-hexadecanoyl-ADP-D-ribose + nicotinamide + L-lysyl-[protein]. The enzyme catalyses L-lysyl-[protein] + NAD(+) = N(6)-(ADP-D-ribosyl)-L-lysyl-[protein] + nicotinamide + H(+). The catalysed reaction is L-arginyl-[protein] + NAD(+) = N(omega)-(ADP-D-ribosyl)-L-arginyl-[protein] + nicotinamide + H(+). Compared to the defatty-acylase activity, the protein deacetylase activity is weak in vitro, and requires activation. The histone deacetylase activity is strongly activated upon binding to nucleosomes and chromatin in vivo. Two molecules of SIRT6 associate with the acidic patch of one nucleosome, while the C-terminal disordered region of SIRT6 associates with nucleosomal DNA, leading to efficient histone deacetylation. The protein-lysine deacetylase activity is also activated by long-chain free fatty-acids. Its function is as follows. NAD-dependent protein deacetylase, deacylase and mono-ADP-ribosyltransferase that plays an essential role in DNA damage repair, telomere maintenance, metabolic homeostasis, inflammation, tumorigenesis and aging. Displays protein-lysine deacetylase or defatty-acylase (demyristoylase and depalmitoylase) activity, depending on the context. Acts as a key histone deacetylase by catalyzing deacetylation of histone H3 at 'Lys-9', 'Lys-18' and 'Lys-56' (H3K9ac, H3K18ac and H3K56ac, respectively), suppressing target gene expression of several transcription factors, including NF-kappa-B. Acts as an inhibitor of transcription elongation by mediating deacetylation of H3K9ac and H3K56ac, preventing release of NELFE from chromatin and causing transcriptional pausing. Involved in DNA repair by promoting double-strand break (DSB) repair: acts as a DSB sensor by recognizing and binding DSB sites, leading to (1) recruitment of DNA repair proteins, such as SMARCA5/SNF2H, and (2) deacetylation of histone H3K9ac and H3K56ac. SIRT6 participation to DSB repair is probably involved in extension of life span. Also promotes DNA repair by deacetylating non-histone proteins, such as DDB2 and p53/TP53. Specifically deacetylates H3K18ac at pericentric heterochromatin, thereby maintaining pericentric heterochromatin silencing at centromeres and protecting against genomic instability and cellular senescence. Involved in telomere maintenance by catalyzing deacetylation of histone H3 in telomeric chromatin, regulating telomere position effect and telomere movement in response to DNA damage. Required for embryonic stem cell differentiation by mediating histone deacetylation of H3K9ac. Plays a major role in metabolism by regulating processes such as glycolysis, gluconeogenesis, insulin secretion and lipid metabolism. Inhibits glycolysis via histone deacetylase activity and by acting as a corepressor of the transcription factor HIF1A, thereby controlling the expression of multiple glycolytic genes. Has tumor suppressor activity by repressing glycolysis, thereby inhibiting the Warburg effect. Also regulates glycolysis and tumorigenesis by mediating deacetylation and nuclear export of non-histone proteins, such as isoform M2 of PKM (PKM2). Acts as a negative regulator of gluconeogenesis by mediating deacetylation of non-histone proteins, such as FOXO1 and KAT2A/GCN5. Promotes beta-oxidation of fatty acids during fasting by catalyzing deacetylation of NCOA2, inducing coactivation of PPARA. Acts as a regulator of lipid catabolism in brown adipocytes, both by catalyzing deacetylation of histones and non-histone proteins, such as FOXO1. Also acts as a regulator of circadian rhythms, both by regulating expression of clock-controlled genes involved in lipid and carbohydrate metabolism, and by catalyzing deacetylation of PER2. The defatty-acylase activity is specifically involved in regulation of protein secretion. Has high activity toward long-chain fatty acyl groups and mediates protein-lysine demyristoylation and depalmitoylation of target proteins, such as RRAS2 and TNF, thereby regulating their secretion. Also acts as a mono-ADP-ribosyltransferase by mediating mono-ADP-ribosylation of PARP1, TRIM28/KAP1 or SMARCC2/BAF170. Mono-ADP-ribosyltransferase activity is involved in DNA repair, cellular senescence, repression of LINE-1 retrotransposon elements and regulation of transcription. This Macaca fascicularis (Crab-eating macaque) protein is NAD-dependent protein deacylase sirtuin-6.